Consider the following 302-residue polypeptide: Pathogenicity locus probable regulatory protein HrpS (302 aa).

One can recognise a Sigma-54 factor interaction domain in the interval 9 to 237 (DDLDAERVPN…LKAAAKRHVL (229 aa)). ATP is bound by residues 37–44 (GETGTGKD) and 99–108 (AQGGTLYLDE). The segment at residues 279-298 (IDAASLELDIPRRTLYRRIK) is a DNA-binding region (H-T-H motif).

In terms of biological role, regulates the activation of the sigma factor HrpL which itself induces the expression of hprD as well as other hrp loci which are involved in plant pathogenicity, hrmA and avr genes. Probably interacts with sigma-54. This chain is Pathogenicity locus probable regulatory protein HrpS (hrpS), found in Pseudomonas syringae pv. syringae.